A 330-amino-acid chain; its full sequence is Transcription factor TGA6 (330 aa).

The segment covering 1 to 13 (MADTSSRTDVSTD) has biased composition (polar residues). The tract at residues 1 to 45 (MADTSSRTDVSTDGDTDHRDLGSDRGHMHAAASDSSDRSKDKLDQ) is disordered. Composition is skewed to basic and acidic residues over residues 15 to 27 (DTDHRDLGSDRGH) and 35 to 45 (SSDRSKDKLDQ). The 64-residue stretch at 44–107 (DQKTLRRLAQ…SSGDQAHSTG (64 aa)) folds into the bZIP domain. Coiled coils occupy residues 45–142 (QKTL…HAGD) and 217–233 (INSLQQTSQQAEDALSQ). The basic motif stretch occupies residues 46–66 (KTLRRLAQNREAARKSRLRKK). The tract at residues 72-86 (LENSRLKLTQLEQEL) is leucine-zipper. Residues 111–327 (ALAFDAEHSR…RALSSLWLAR (217 aa)) form the DOG1 domain.

It belongs to the bZIP family. As to quaternary structure, binds DNA as a dimer. Interacts with NPR1, NPR3 and NPR4. Interacts with GRXC9/GRX480. As to expression, expressed predominantly in roots and flowers.

The protein resides in the nucleus. Transcriptional activator that binds specifically to the DNA sequence 5'-TGACG-3'. Recognizes ocs elements like the as-1 motif of the cauliflower mosaic virus 35S promoter. Binding to the as-1-like cis elements mediate auxin- and salicylic acid-inducible transcription. May be involved in the induction of the systemic acquired resistance (SAR) via its interaction with NPR1. Could also bind to the Hex-motif (5'-TGACGTGG-3') another cis-acting element found in plant histone promoters. In Arabidopsis thaliana (Mouse-ear cress), this protein is Transcription factor TGA6 (TGA6).